The following is a 400-amino-acid chain: Phosphoglycerate kinase (400 aa).

Residues 22–24 (DLN), Arg37, 60–63 (HLGR), Arg119, and Arg159 contribute to the substrate site. Residues Lys209, Gly297, Glu328, and 354 to 357 (GGDS) contribute to the ATP site.

The protein belongs to the phosphoglycerate kinase family. As to quaternary structure, monomer.

Its subcellular location is the cytoplasm. The enzyme catalyses (2R)-3-phosphoglycerate + ATP = (2R)-3-phospho-glyceroyl phosphate + ADP. It functions in the pathway carbohydrate degradation; glycolysis; pyruvate from D-glyceraldehyde 3-phosphate: step 2/5. The sequence is that of Phosphoglycerate kinase from Saccharopolyspora erythraea (strain ATCC 11635 / DSM 40517 / JCM 4748 / NBRC 13426 / NCIMB 8594 / NRRL 2338).